A 322-amino-acid polypeptide reads, in one-letter code: MFSKSIIAASLLTAVTAHQNFHQFWVNGVSPGYQVSIRMPPSNSPVLDVASDNITCNVNGNVVPSGVNTTAANEGDAITVQWDSSTHPGPIQHYLFGPVDDASMATGIGSWFKIDEYIEVNGTWASNLMDAGNMSYTFNLPTGMASGEYLLRSEMLALHSAQTVGGAQWYIGCAQLSITGTSGDSCGPSIELPGDYNATDPSIYIPDIYYGFDISTYTPPGGAVATCGASGSGATGAASATAVATSAVSSAVASSSAAGVSSSAVVASSSVASSVLASSSAVLPSSSVAAIVTSAPSTLITATSAPAATSSAVEVGDDECEA.

The signal sequence occupies residues 1–17 (MFSKSIIAASLLTAVTA). H18 serves as a coordination point for Cu(2+). 2 N-linked (GlcNAc...) asparagine glycosylation sites follow: N53 and N68. Residues C56 and C173 are joined by a disulfide bond. H87 lines the Cu(2+) pocket. N121 and N133 each carry an N-linked (GlcNAc...) asparagine glycan. O2 contacts are provided by H159 and Q168. A Cu(2+)-binding site is contributed by Y170. N-linked (GlcNAc...) asparagine glycosylation is present at N197.

It belongs to the polysaccharide monooxygenase AA9 family. The cofactor is Cu(2+).

The protein resides in the secreted. The catalysed reaction is [(1-&gt;4)-beta-D-glucosyl]n+m + reduced acceptor + O2 = 4-dehydro-beta-D-glucosyl-[(1-&gt;4)-beta-D-glucosyl]n-1 + [(1-&gt;4)-beta-D-glucosyl]m + acceptor + H2O.. Lytic polysaccharide monooxygenase (LPMO) that depolymerizes crystalline and amorphous polysaccharides via the oxidation of scissile alpha- or beta-(1-4)-glycosidic bonds, yielding C1 and C4 oxidation products. Catalysis by LPMOs requires the reduction of the active-site copper from Cu(II) to Cu(I) by a reducing agent and H(2)O(2) or O(2) as a cosubstrate. This Botryotinia fuckeliana (strain B05.10) (Noble rot fungus) protein is AA9 family lytic polysaccharide monooxygenase B.